Consider the following 85-residue polypeptide: Large ribosomal subunit protein bL27 (85 aa).

The interval 1–21 (MAHKKGGGSTHNGRDSKPKML) is disordered.

This sequence belongs to the bacterial ribosomal protein bL27 family.

The sequence is that of Large ribosomal subunit protein bL27 from Albidiferax ferrireducens (strain ATCC BAA-621 / DSM 15236 / T118) (Rhodoferax ferrireducens).